We begin with the raw amino-acid sequence, 150 residues long: uncharacterized protein (150 aa).

A compositionally biased stretch (low complexity) spans M1–G19. 2 disordered regions span residues M1–T21 and E85–E131. Positions R106 to V115 are enriched in pro residues.

This is an uncharacterized protein from Schizosaccharomyces pombe (strain 972 / ATCC 24843) (Fission yeast).